The sequence spans 520 residues: Transcription factor MYB33 (520 aa).

Residues 1–24 (MSYTSTDSDHNESPAADDNGSDCR) form a disordered region. HTH myb-type domains follow at residues 29 to 81 (GHAL…ANHL) and 82 to 136 (RPNL…KRRQ). 2 consecutive DNA-binding regions (H-T-H motif) follow at residues 57-81 (WNAVQKHTSLFRCGKSCRLRWANHL) and 109-132 (WARMAAHLPGRTDNEIKNYWNTRI). A compositionally biased stretch (low complexity) spans 331–342 (SSSPPHSDLLDP). 2 disordered regions span residues 331–359 (SSSPPHSDLLDPFDTYIQSPPPPTGGEES) and 426–447 (EMSTQNADETPPRQREKKRKPL).

In terms of tissue distribution, mostly expressed in stems, shoot apices, flowers and floral shoot tips, and, to a lower extent, in roots (e.g. root tips), seedlings, leaves and siliques.

It localises to the nucleus. In terms of biological role, transcriptional activator of alpha-amylase expression that binds to 5'-CAACTGTC-3' motif in target gene promoter. Positive regulator of abscisic acid (ABA) responses leading to growth arrest during seed germination. In vegetative tissues, inhibits growth by reducing cell proliferation. Promotes the expression of aleurone-related genes (e.g. CP1, CP, GASA1, BXL1 and BXL2) in seeds. Together with MYB65 and MYB101, promotes the programmed cell death (PCD) the vacuolation of protein storage vacuoles (PSVs) in the aleurone layers during seed germination. Binds to a GARE site (GA-response element) in the LEAFY promoter, essential for its gibberellic acid (GA)-mediated induction. Together with MYB65, facilitates anther and tapetum development. In Arabidopsis thaliana (Mouse-ear cress), this protein is Transcription factor MYB33.